A 377-amino-acid chain; its full sequence is NAC domain-containing protein 76 (377 aa).

Positions 10-159 constitute an NAC domain; sequence VPPGFRFHPT…GWVVCRAFKK (150 aa). Residues 110–165 mediate DNA binding; it reads IGMRKTLVFYKGRAPNGQKTDWIMHEYRLESDENAPPQEEGWVVCRAFKKKPMTGQ. The disordered stretch occupies residues 312–347; sequence GVSGFGGHHEEDNNKIGHYNNEESNNKGSVETASST. A compositionally biased stretch (basic and acidic residues) spans 318–336; that stretch reads GHHEEDNNKIGHYNNEESN. The span at 337 to 347 shows a compositional bias: polar residues; it reads NKGSVETASST.

The protein belongs to the plant vascular related NAC-domain protein family. As to quaternary structure, interacts with NAC030/VND7. Detected in root protoxylem and metaxylem poles and in vessels of protoxylems, outermost metaxylems, inner metaxylems, shoots and hypocotyls. Expressed in roots, hypocotyls, cotyledons and leaves. Present in developing xylems. Specifically expressed in vessels but not in interfascicular fibers in stems.

Its subcellular location is the nucleus. Transcription activator that binds to the secondary wall NAC binding element (SNBE), 5'-(T/A)NN(C/T)(T/C/G)TNNNNNNNA(A/C)GN(A/C/T)(A/T)-3', in the promoter of target genes. Involved in xylem formation by promoting the expression of secondary wall-associated transcription factors and of genes involved in secondary wall biosynthesis and programmed cell death, genes driven by the secondary wall NAC binding element (SNBE). Triggers thickening of secondary walls. This chain is NAC domain-containing protein 76, found in Arabidopsis thaliana (Mouse-ear cress).